Here is a 68-residue protein sequence, read N- to C-terminus: Lipopolysaccharide export system ATP-binding protein LptB (68 aa).

This sequence belongs to the ABC transporter superfamily. Outer membrane lipopolysaccharide export (TC 1.B.42) family. Component of the lipopolysaccharide transport and assembly complex. The LptBFG transporter is composed of two ATP-binding proteins (LptB) and two transmembrane proteins (LptF and LptG).

It localises to the cytoplasm. It is found in the cell inner membrane. Part of the ABC transporter complex LptBFG involved in the translocation of lipopolysaccharide (LPS) from the inner membrane to the outer membrane. Probably responsible for energy coupling to the transport system. The chain is Lipopolysaccharide export system ATP-binding protein LptB (lptB) from Klebsiella oxytoca.